The following is a 297-amino-acid chain: Mycothiol acetyltransferase (297 aa).

N-acetyltransferase domains are found at residues 8-153 (DALD…PPLP) and 156-297 (VALR…QYAL). Glu-36 contacts 1D-myo-inositol 2-(L-cysteinylamino)-2-deoxy-alpha-D-glucopyranoside. Acetyl-CoA is bound at residue 80–82 (LAV). Residues Glu-183, Lys-223, and Glu-231 each coordinate 1D-myo-inositol 2-(L-cysteinylamino)-2-deoxy-alpha-D-glucopyranoside. Residues 235–237 (VGV) and 242–248 (QGGGLGK) each bind acetyl-CoA. Tyr-269 serves as a coordination point for 1D-myo-inositol 2-(L-cysteinylamino)-2-deoxy-alpha-D-glucopyranoside. Residue 274–279 (NSPAVR) participates in acetyl-CoA binding.

This sequence belongs to the acetyltransferase family. MshD subfamily. Monomer.

The enzyme catalyses 1D-myo-inositol 2-(L-cysteinylamino)-2-deoxy-alpha-D-glucopyranoside + acetyl-CoA = mycothiol + CoA + H(+). In terms of biological role, catalyzes the transfer of acetyl from acetyl-CoA to desacetylmycothiol (Cys-GlcN-Ins) to form mycothiol. The polypeptide is Mycothiol acetyltransferase (Actinosynnema mirum (strain ATCC 29888 / DSM 43827 / JCM 3225 / NBRC 14064 / NCIMB 13271 / NRRL B-12336 / IMRU 3971 / 101)).